The sequence spans 424 residues: Histidine--tRNA ligase (424 aa).

The protein belongs to the class-II aminoacyl-tRNA synthetase family. In terms of assembly, homodimer.

It localises to the cytoplasm. It carries out the reaction tRNA(His) + L-histidine + ATP = L-histidyl-tRNA(His) + AMP + diphosphate + H(+). The protein is Histidine--tRNA ligase of Escherichia coli O17:K52:H18 (strain UMN026 / ExPEC).